The following is a 531-amino-acid chain: Arginine--tRNA ligase (531 aa).

The 'HIGH' region motif lies at 113–123 (ANPTGPLHIGH).

This sequence belongs to the class-I aminoacyl-tRNA synthetase family. Monomer.

The protein localises to the cytoplasm. It carries out the reaction tRNA(Arg) + L-arginine + ATP = L-arginyl-tRNA(Arg) + AMP + diphosphate. This is Arginine--tRNA ligase from Campylobacter lari (strain RM2100 / D67 / ATCC BAA-1060).